Reading from the N-terminus, the 298-residue chain is Protoheme IX farnesyltransferase (298 aa).

The next 9 helical transmembrane spans lie at 26–46 (VVSLIVFTAVIGMFLSVPGAV), 52–72 (LLGTIGISLVAGAAAALNCLV), 93–113 (VSVPETLFFLVMVGGLGLFIL), 120–140 (LTMWLTLGTFVGYAIIYTVIL), 148–168 (IVIGGASGAMPPVLGWAAITG), 174–194 (ALLLFLIIFAWTPPHFWALAL), 219–239 (LHVLLYTIILCIATVLPYLTQ), 241–261 (SGLIYLVSVLILDAIFLYYAI), and 278–298 (YSIIYLALLFTALLVDHYFYF).

It belongs to the UbiA prenyltransferase family. Protoheme IX farnesyltransferase subfamily.

Its subcellular location is the cell inner membrane. It carries out the reaction heme b + (2E,6E)-farnesyl diphosphate + H2O = Fe(II)-heme o + diphosphate. The protein operates within porphyrin-containing compound metabolism; heme O biosynthesis; heme O from protoheme: step 1/1. In terms of biological role, converts heme B (protoheme IX) to heme O by substitution of the vinyl group on carbon 2 of heme B porphyrin ring with a hydroxyethyl farnesyl side group. This chain is Protoheme IX farnesyltransferase, found in Nitrosomonas eutropha (strain DSM 101675 / C91 / Nm57).